We begin with the raw amino-acid sequence, 148 residues long: uncharacterized protein (148 aa).

The span at methionine 1–serine 17 shows a compositional bias: polar residues. The interval methionine 1–arginine 148 is disordered. Composition is skewed to basic and acidic residues over residues glutamate 36–proline 47 and lysine 58–arginine 67. Residues serine 100 and serine 107 each carry the phosphoserine modification. The span at valine 128–arginine 148 shows a compositional bias: basic residues.

This is an uncharacterized protein from Arabidopsis thaliana (Mouse-ear cress).